The primary structure comprises 105 residues: Small ribosomal subunit protein eS24 (105 aa).

Residues 85–105 (SVIAKNEEPEEEPEEEAEDAE) form a disordered region. The segment covering 92-105 (EPEEEPEEEAEDAE) has biased composition (acidic residues).

Belongs to the eukaryotic ribosomal protein eS24 family.

The protein is Small ribosomal subunit protein eS24 of Methanosphaera stadtmanae (strain ATCC 43021 / DSM 3091 / JCM 11832 / MCB-3).